A 259-amino-acid polypeptide reads, in one-letter code: Thiazole synthase (259 aa).

K102 acts as the Schiff-base intermediate with DXP in catalysis. 1-deoxy-D-xylulose 5-phosphate is bound by residues G163, 189-190 (AG), and 211-212 (NT).

Belongs to the ThiG family. As to quaternary structure, homotetramer. Forms heterodimers with either ThiH or ThiS.

The protein localises to the cytoplasm. The enzyme catalyses [ThiS sulfur-carrier protein]-C-terminal-Gly-aminoethanethioate + 2-iminoacetate + 1-deoxy-D-xylulose 5-phosphate = [ThiS sulfur-carrier protein]-C-terminal Gly-Gly + 2-[(2R,5Z)-2-carboxy-4-methylthiazol-5(2H)-ylidene]ethyl phosphate + 2 H2O + H(+). It functions in the pathway cofactor biosynthesis; thiamine diphosphate biosynthesis. In terms of biological role, catalyzes the rearrangement of 1-deoxy-D-xylulose 5-phosphate (DXP) to produce the thiazole phosphate moiety of thiamine. Sulfur is provided by the thiocarboxylate moiety of the carrier protein ThiS. In vitro, sulfur can be provided by H(2)S. This chain is Thiazole synthase, found in Novosphingobium aromaticivorans (strain ATCC 700278 / DSM 12444 / CCUG 56034 / CIP 105152 / NBRC 16084 / F199).